Consider the following 423-residue polypeptide: Serine hydroxymethyltransferase (423 aa).

(6S)-5,6,7,8-tetrahydrofolate-binding positions include Leu120 and 124-126 (GHL). Lys229 bears the N6-(pyridoxal phosphate)lysine mark. (6S)-5,6,7,8-tetrahydrofolate contacts are provided by residues Glu245 and 353–355 (SPF).

Belongs to the SHMT family. In terms of assembly, homodimer. Pyridoxal 5'-phosphate serves as cofactor.

It is found in the cytoplasm. The catalysed reaction is (6R)-5,10-methylene-5,6,7,8-tetrahydrofolate + glycine + H2O = (6S)-5,6,7,8-tetrahydrofolate + L-serine. It participates in one-carbon metabolism; tetrahydrofolate interconversion. The protein operates within amino-acid biosynthesis; glycine biosynthesis; glycine from L-serine: step 1/1. In terms of biological role, catalyzes the reversible interconversion of serine and glycine with tetrahydrofolate (THF) serving as the one-carbon carrier. This reaction serves as the major source of one-carbon groups required for the biosynthesis of purines, thymidylate, methionine, and other important biomolecules. Also exhibits THF-independent aldolase activity toward beta-hydroxyamino acids, producing glycine and aldehydes, via a retro-aldol mechanism. This is Serine hydroxymethyltransferase from Prochlorococcus marinus (strain MIT 9312).